The primary structure comprises 206 residues: MAYAFKKNGLLKPFVSTAAICLLVAGTVVLCHASGGGEGAHHVDTGKQMKDFMWRVIDFIALAGVIVWALKKANAKGALADRSANVEKALREAEEARTAAEKKFAEYSEKLEKANQEIDGIYAAIRKEGELEKERIIAEARITAEKIREQATATATQEVLKARAELRDEAARLAVQMAEQALREAIKKDDQDRLVSEYLTKVENLH.

Residues leucine 10–leucine 30 traverse the membrane as a helical segment.

It belongs to the ATPase B chain family. As to quaternary structure, F-type ATPases have 2 components, F(1) - the catalytic core - and F(0) - the membrane proton channel. F(1) has five subunits: alpha(3), beta(3), gamma(1), delta(1), epsilon(1). F(0) has three main subunits: a(1), b(2) and c(10-14). The alpha and beta chains form an alternating ring which encloses part of the gamma chain. F(1) is attached to F(0) by a central stalk formed by the gamma and epsilon chains, while a peripheral stalk is formed by the delta and b chains.

It is found in the cell inner membrane. F(1)F(0) ATP synthase produces ATP from ADP in the presence of a proton or sodium gradient. F-type ATPases consist of two structural domains, F(1) containing the extramembraneous catalytic core and F(0) containing the membrane proton channel, linked together by a central stalk and a peripheral stalk. During catalysis, ATP synthesis in the catalytic domain of F(1) is coupled via a rotary mechanism of the central stalk subunits to proton translocation. Functionally, component of the F(0) channel, it forms part of the peripheral stalk, linking F(1) to F(0). The sequence is that of ATP synthase subunit b from Geobacter sulfurreducens (strain ATCC 51573 / DSM 12127 / PCA).